Reading from the N-terminus, the 335-residue chain is tRNA (guanine(6)-N2)-methyltransferase (335 aa).

Residues Glu-47 to Leu-150 form the THUMP domain. S-adenosyl-L-methionine-binding positions include Ser-195–Thr-197, Asp-243–Ala-244, and Asn-260.

The protein belongs to the methyltransferase superfamily. As to quaternary structure, monomer in solution.

It localises to the cytoplasm. The enzyme catalyses guanosine(6) in tRNA + S-adenosyl-L-methionine = N(2)-methylguanosine(6) in tRNA + S-adenosyl-L-homocysteine + H(+). Functionally, S-adenosyl-L-methionine-dependent methyltransferase that catalyzes the methylation of the guanosine nucleotide at position 6 (m2G6) in tRNA(Phe). The protein is tRNA (guanine(6)-N2)-methyltransferase of Thermus thermophilus (strain ATCC BAA-163 / DSM 7039 / HB27).